Reading from the N-terminus, the 802-residue chain is Leucine--tRNA ligase (802 aa).

A 'HIGH' region motif is present at residues 39–50 (PYPSGAGLHVGH). A 'KMSKS' region motif is present at residues 574–578 (KMSKS). Lys577 serves as a coordination point for ATP.

Belongs to the class-I aminoacyl-tRNA synthetase family.

The protein resides in the cytoplasm. The enzyme catalyses tRNA(Leu) + L-leucine + ATP = L-leucyl-tRNA(Leu) + AMP + diphosphate. This Macrococcus caseolyticus (strain JCSC5402) (Macrococcoides caseolyticum) protein is Leucine--tRNA ligase.